The chain runs to 380 residues: Phospho-N-acetylmuramoyl-pentapeptide-transferase (380 aa).

A run of 11 helical transmembrane segments spans residues 26 to 46, 75 to 95, 98 to 118, 135 to 155, 161 to 181, 183 to 203, 222 to 242, 259 to 279, 283 to 303, 311 to 331, and 357 to 377; these read IVAAGLTAMVLGLLLGPIFIE, MGGALILASVAIATLLFADLA, FVWAALLVTLGYGAIGFTDDW, LVLQVLVVVVVYYACLTDWRF, FPWVFVGSYVDLHVTLPFVPS, LFNPDLGFLYLPFMVFVVIAT, VVSAMTFLALSYVAGATIAGF, LGVFCSAIFGAGVAFLWYNTY, VFMGDVGSLALGGGLGMMAVL, AILHGVFLTETVSVILQVWSF, and KIIVRFWIISVMLALVALLSI.

This sequence belongs to the glycosyltransferase 4 family. MraY subfamily. Mg(2+) serves as cofactor.

The protein localises to the cell inner membrane. It catalyses the reaction UDP-N-acetyl-alpha-D-muramoyl-L-alanyl-gamma-D-glutamyl-meso-2,6-diaminopimeloyl-D-alanyl-D-alanine + di-trans,octa-cis-undecaprenyl phosphate = di-trans,octa-cis-undecaprenyl diphospho-N-acetyl-alpha-D-muramoyl-L-alanyl-D-glutamyl-meso-2,6-diaminopimeloyl-D-alanyl-D-alanine + UMP. Its pathway is cell wall biogenesis; peptidoglycan biosynthesis. Catalyzes the initial step of the lipid cycle reactions in the biosynthesis of the cell wall peptidoglycan: transfers peptidoglycan precursor phospho-MurNAc-pentapeptide from UDP-MurNAc-pentapeptide onto the lipid carrier undecaprenyl phosphate, yielding undecaprenyl-pyrophosphoryl-MurNAc-pentapeptide, known as lipid I. This is Phospho-N-acetylmuramoyl-pentapeptide-transferase from Anaeromyxobacter dehalogenans (strain 2CP-1 / ATCC BAA-258).